Here is a 332-residue protein sequence, read N- to C-terminus: MARKSSLAQAAIERKPVLLRPQLNVPRMSGITALPMERRPLPVAPSPSAKPELPARSALVCHAAAASVPLPNSDSAPQPNVLLAKIRAIMFFAWSFLLSLPLFVTMMVMAPLVLAFDKYRRLAQHFVNNLWACASTAPFYKVTIIGRENLPPPDKPVVYVANHQSFLDIYSLFHLQRPFKFISKTSNFLIPIIGWSMFLTGHVMINRVDRRSQLKCLQQCRDLLAEGAPVLFFPEGTRSLDCKMAGFKKGAFSVAAKAGVEVVPITLLGTGSLMPSGKESQLRPGQVTIVVHKALPPNKNADQLCDAARQAVASSLPPELVGSATEMAPDEQ.

The helical transmembrane segment at 96-116 threads the bilayer; it reads FLLSLPLFVTMMVMAPLVLAF. The HXXXXD motif signature appears at 163 to 168; it reads HQSFLD. Residues 185–205 form a helical membrane-spanning segment; sequence TSNFLIPIIGWSMFLTGHVMI. Residues 235 to 238 carry the EGTR motif motif; sequence EGTR.

Belongs to the 1-acyl-sn-glycerol-3-phosphate acyltransferase family.

It localises to the membrane. The enzyme catalyses a 1-acyl-sn-glycero-3-phosphate + an acyl-CoA = a 1,2-diacyl-sn-glycero-3-phosphate + CoA. The protein operates within phospholipid metabolism; CDP-diacylglycerol biosynthesis; CDP-diacylglycerol from sn-glycerol 3-phosphate: step 2/3. Functionally, converts lysophosphatidic acid (LPA) into phosphatidic acid by incorporating an acyl moiety at the sn-2 position of the glycerol backbone. This Chlamydomonas reinhardtii (Chlamydomonas smithii) protein is 1-acyl-sn-glycerol-3-phosphate acyltransferase CHLREDRAFT_174358.